The chain runs to 1142 residues: ABC transporter F family member 4 (1142 aa).

Residues 1–564 are disordered; sequence MGPKGKKKGQ…EDAFELAKKK (564 aa). 3 stretches are compositionally biased toward low complexity: residues 121 to 143, 153 to 166, and 182 to 195; these read PQPV…QQQQ and PQPV…APQK. Composition is skewed to acidic residues over residues 203 to 212 and 233 to 244; these read SEDEDEEDEV and EEEEEEEEEEIE. Composition is skewed to basic residues over residues 249-261 and 280-290; these read KGGK…KGGK and KGGKKDKKKGS. Positions 295–306 are enriched in acidic residues; sequence EEEEEEEEEEIE. Over residues 314-328 the composition is skewed to basic and acidic residues; the sequence is NKKDQKKGGKGKHVE. Residues 329–340 are compositionally biased toward acidic residues; the sequence is EEEEEEEEEEIE. The span at 377-387 shows a compositional bias: basic residues; it reads KGGKKDKKKGS. 2 stretches are compositionally biased toward acidic residues: residues 392 to 404 and 441 to 451; these read EEEE…EEIE and EEEEQEQEEEE. The span at 456-467 shows a compositional bias: basic residues; it reads SKSNKKDKKKGK. Residues 471–480 are compositionally biased toward acidic residues; that stretch reads EEEEEEEEEE. The span at 485–496 shows a compositional bias: basic residues; sequence SKSNKKDKKKGS. Over residues 501–518 the composition is skewed to acidic residues; that stretch reads EEEEEEEEEEEEEKEEEE. The span at 530-548 shows a compositional bias: basic residues; that stretch reads AKKVKKVDKKEKKKEKEKK. ABC transporter domains are found at residues 604–857 and 923–1139; these read IKFD…RSKE and LVFK…DNMV. ATP-binding positions include 636-643 and 956-963; these read GRNGIGKS and GMNGVGKS.

This sequence belongs to the ABC transporter superfamily.

In Dictyostelium discoideum (Social amoeba), this protein is ABC transporter F family member 4 (abcF4).